We begin with the raw amino-acid sequence, 171 residues long: MTPFRAGLLALVLTLILDQATKLGLYFGTDLVLTQPWRLAPFADFVVVWNRGVSYGLFQQEGGIGRWLLVALSLAAAIGLGLWMRRATSRLLGIALGLIVGGALGNAIDRAAYGAVFDFVHLHAGGWSWYVFNVADAAIVAGVIGLILDSLSPDGRKDRASPARGDPAPRL.

The next 3 helical transmembrane spans lie at 7-27 (GLLA…GLYF), 64-84 (IGRW…GLWM), and 88-108 (TSRL…GNAI). Catalysis depends on residues Asp118 and Asp136. A helical membrane pass occupies residues 128–148 (SWYVFNVADAAIVAGVIGLIL).

Belongs to the peptidase A8 family.

It is found in the cell inner membrane. The enzyme catalyses Release of signal peptides from bacterial membrane prolipoproteins. Hydrolyzes -Xaa-Yaa-Zaa-|-(S,diacylglyceryl)Cys-, in which Xaa is hydrophobic (preferably Leu), and Yaa (Ala or Ser) and Zaa (Gly or Ala) have small, neutral side chains.. It participates in protein modification; lipoprotein biosynthesis (signal peptide cleavage). Functionally, this protein specifically catalyzes the removal of signal peptides from prolipoproteins. In Methylobacterium radiotolerans (strain ATCC 27329 / DSM 1819 / JCM 2831 / NBRC 15690 / NCIMB 10815 / 0-1), this protein is Lipoprotein signal peptidase.